Consider the following 415-residue polypeptide: Serine hydroxymethyltransferase (415 aa).

(6S)-5,6,7,8-tetrahydrofolate is bound by residues leucine 121 and 125–127 (GHL). Lysine 230 carries the N6-(pyridoxal phosphate)lysine modification. Residue 355 to 357 (SPF) coordinates (6S)-5,6,7,8-tetrahydrofolate.

It belongs to the SHMT family. In terms of assembly, homodimer. Pyridoxal 5'-phosphate serves as cofactor.

Its subcellular location is the cytoplasm. It catalyses the reaction (6R)-5,10-methylene-5,6,7,8-tetrahydrofolate + glycine + H2O = (6S)-5,6,7,8-tetrahydrofolate + L-serine. It functions in the pathway one-carbon metabolism; tetrahydrofolate interconversion. Its pathway is amino-acid biosynthesis; glycine biosynthesis; glycine from L-serine: step 1/1. In terms of biological role, catalyzes the reversible interconversion of serine and glycine with tetrahydrofolate (THF) serving as the one-carbon carrier. This reaction serves as the major source of one-carbon groups required for the biosynthesis of purines, thymidylate, methionine, and other important biomolecules. Also exhibits THF-independent aldolase activity toward beta-hydroxyamino acids, producing glycine and aldehydes, via a retro-aldol mechanism. The protein is Serine hydroxymethyltransferase of Lactococcus lactis subsp. lactis (strain IL1403) (Streptococcus lactis).